Reading from the N-terminus, the 248-residue chain is MARRRRHRGPRRPRPPGPTGAVPTAQSQVTSTPNSEPAVRSAPAAAPPPPPAGGPPPSCSLLLRQWLHVPESASDDDDDDDWPDSPPPEPAPEARPTAAAPRPRPPPPGVGPGGGADPSHPPSRPFRLPPRLALRLRVTAEHLARLRLRRAGGEGAPEPPATPATPATPATPATPARVRFSPHVRVRHLVVWASAARLARRGSWARERADRARFRRRVAEAEAVIGPCLGPEARARALARGAGPANSV.

Residues 1–14 (MARRRRHRGPRRPR) show a composition bias toward basic residues. The interval 1-16 (MARRRRHRGPRRPRPP) is required for nucleolar localization. Disordered stretches follow at residues 1 to 129 (MARR…FRLP) and 149 to 174 (RRAG…TPAT). Over residues 24 to 35 (TAQSQVTSTPNS) the composition is skewed to polar residues. Pro residues predominate over residues 45-58 (AAPPPPPAGGPPPS). The span at 73-83 (ASDDDDDDDWP) shows a compositional bias: acidic residues. 2 stretches are compositionally biased toward pro residues: residues 84–93 (DSPPPEPAPE) and 119–128 (SHPPSRPFRL). The short motif at 128–137 (LPPRLALRLR) is the Nuclear export signal element. 5 tandem repeats follow at residues 161 to 163 (ATP), 164 to 166 (ATP), 167 to 169 (ATP), 170 to 172 (ATP), and 173 to 175 (ATP). Residues 161-175 (ATPATPATPATPATP) are 5 X 3 AA tandem repeats of A-T-P. Residues 164 to 174 (ATPATPATPAT) are compositionally biased toward low complexity. The tract at residues 175-188 (PARVRFSPHVRVRH) is binding to PP1CA. The tract at residues 175 to 188 (PARVRFSPHVRVRH) is interaction with host PPP1CA. The segment at 190–248 (VVWASAARLARRGSWARERADRARFRRRVAEAEAVIGPCLGPEARARALARGAGPANSV) is important for interferon resistance. The Bipartite nuclear localization signal signature appears at 200 to 218 (RRGSWARERADRARFRRRV). Residues 218 to 233 (VAEAEAVIGPCLGPEA) are interaction with host EIF2S1/EIF-2ALPHA.

The protein belongs to the PPP1R15 family. As to quaternary structure, interacts with host PPP1CA; this interaction forms a high-molecular-weight complex that dephosphorylates EIF2S1/eIF-2alpha. Interacts with host EIF2S1/eIF-2alpha; this interaction is crucial for the specific dephosphorylation of EIF2S1/eIF-2alpha by PPP1CA. Binds to proliferating cell nuclear antigen (PCNA), which may release host cells from growth arrest and facilitate viral replication. Interacts (via N-terminus) with host C1QBP; this interaction allows C1QBP to be recruited to the inner nuclear membrane by ICP34.5. Interacts with host PRKCA. Interacts with protein UL31. Interacts with host STING/TMEM173; this interaction inhibits the intracellular DNA sensing pathway. Interacts with host BECN1; this interaction modulates host autophagy.

It is found in the host cytoplasm. It localises to the host nucleus. The protein resides in the host nucleolus. Its subcellular location is the virion. Functionally, inhibits the establishment of the immune response and of the integrated stress response (ISR) in the infected cell. Plays essential roles in viral nuclear egress to mediate capsid transit across the nuclear membrane. Facilitates nuclear egress cooperatively with host C1QBP and protein kinase C/PKC to induce lamin A/C phosphorylation and subsequent reorganization. In turn, lamina disassembles and nuclear egress occurs. Recruits the serine/threonine protein phosphatase PPP1CA/PP1-alpha to dephosphorylate the translation initiation factor EIF2S1/eIF-2alpha, thereby couteracting the host shutoff of protein synthesis involving double-stranded RNA-dependent protein kinase EIF2AK2/PKR. In turn, controls host IRF3 activation and subsequently inhibits host interferon response. Controls the DNA sensing pathway by interacting with and inhibiting host STING/TMEM173. Also down-modulates the host MHC class II proteins cell surface expression. Acts as a neurovirulence factor that has a profound effect on the growth of the virus in central nervous system tissue, by interacting with host BECN1 and thereby antagonizing the host autophagy response. This chain is Neurovirulence factor ICP34.5 (ICP34.5), found in Homo sapiens (Human).